The sequence spans 523 residues: Glycerate kinase (523 aa).

Phosphoserine is present on serine 60. Lysine 200 is subject to N6-acetyllysine.

Belongs to the glycerate kinase type-2 family. In terms of tissue distribution, expressed in the hippocampus, callus, brain, cerebellum, renal cortex interstitial cells, epithelium of interlobular bile duct and skeletal muscle.

Its subcellular location is the cytoplasm. It catalyses the reaction (R)-glycerate + ATP = (2R)-3-phosphoglycerate + ADP + H(+). This is Glycerate kinase (Glyctk) from Mus musculus (Mouse).